Consider the following 391-residue polypeptide: Aspartate carbamoyltransferase 3, chloroplastic (391 aa).

The transit peptide at 1–69 directs the protein to the chloroplast; sequence MTASSSLFSC…SKCDKMIKTR (69 aa). Residues Arg-137 and Thr-138 each contribute to the carbamoyl phosphate site. UMP-binding residues include Arg-137 and Thr-138. Lys-167 lines the L-aspartate pocket. Arg-188, His-216, and Gln-219 together coordinate carbamoyl phosphate. Residues Arg-188 and His-216 each coordinate UMP. Positions 249 and 311 each coordinate UMP. 2 residues coordinate L-aspartate: Arg-249 and Arg-311. Residues Leu-351 and Pro-352 each coordinate carbamoyl phosphate.

Belongs to the aspartate/ornithine carbamoyltransferase superfamily. ATCase family. As to quaternary structure, homotrimer.

It localises to the plastid. The protein resides in the chloroplast. It carries out the reaction carbamoyl phosphate + L-aspartate = N-carbamoyl-L-aspartate + phosphate + H(+). The protein operates within pyrimidine metabolism; UMP biosynthesis via de novo pathway; (S)-dihydroorotate from bicarbonate: step 2/3. Its activity is regulated as follows. Feedback inhibited by UMP. Functionally, catalyzes the condensation of carbamoyl phosphate and aspartate to form carbamoyl aspartate and inorganic phosphate, the committed step in the de novo pyrimidine nucleotide biosynthesis pathway. This Pisum sativum (Garden pea) protein is Aspartate carbamoyltransferase 3, chloroplastic (PYRB3).